The sequence spans 472 residues: Major capsid protein (472 aa).

Belongs to the NCLDV major capsid protein family. Homotrimer. The N-terminus is blocked.

It localises to the virion. Its function is as follows. Major capsid protein that self assembles to form an icosahedral capsid. Represents around 50% of the total virion protein mass. In Simulium (IIV-22), this protein is Major capsid protein (MCP).